A 141-amino-acid chain; its full sequence is Large ribosomal subunit protein uL6 (141 aa).

The protein belongs to the universal ribosomal protein uL6 family.

The chain is Large ribosomal subunit protein uL6 from Haemonchus contortus (Barber pole worm).